Consider the following 420-residue polypeptide: MSNGVTAPLARHAMAYVLAGGRGSRLMELTDRRAKPAVYFGGKSRIIDFALSNALNSGIRRIAVATQYKAHSLIRHLQRGWNFFRPERNESFDILPASQRVSDDMWYRGTADAVYQNIDIIESYDPKFIVLLAGDHVYKMDYEKMLQQHVEQGADVTVGCLEVARSEATAFGVMHVDAKDVIQSFLEKPADPPAMPGKPDRALVSMGIYVFDTKFLIEELHRDAANPNSSHDFGKDIIPYIVQHGKAVAHHFDKSCRRSHAEDTSYWRDAGTVDAYWAANIDLTDIVPQLDLYDREWPIWTYGEITPPAKFVHDKDGRRGEAVSSLVSGGCIISGAALRHTLLFTGVRVHSYSQVEGAVILPYADIARSCRLKNVVVDAEVRIPDGLVVGEDPELDARRFRRTDSGICLITQPMIDRLDQ.

Alpha-D-glucose 1-phosphate-binding positions include Tyr107, Gly172, 187-188 (EK), and Ser205.

The protein belongs to the bacterial/plant glucose-1-phosphate adenylyltransferase family. As to quaternary structure, homotetramer.

The catalysed reaction is alpha-D-glucose 1-phosphate + ATP + H(+) = ADP-alpha-D-glucose + diphosphate. It functions in the pathway glycan biosynthesis; glycogen biosynthesis. In terms of biological role, involved in the biosynthesis of ADP-glucose, a building block required for the elongation reactions to produce glycogen. Catalyzes the reaction between ATP and alpha-D-glucose 1-phosphate (G1P) to produce pyrophosphate and ADP-Glc. This is Glucose-1-phosphate adenylyltransferase from Rhodopseudomonas palustris (strain HaA2).